Reading from the N-terminus, the 184-residue chain is Protein GrpE (184 aa).

Residues 1 to 26 (MTAPQEPVDSTPESGENAATPGLEDD) form a disordered region.

It belongs to the GrpE family. Homodimer.

It localises to the cytoplasm. Participates actively in the response to hyperosmotic and heat shock by preventing the aggregation of stress-denatured proteins, in association with DnaK and GrpE. It is the nucleotide exchange factor for DnaK and may function as a thermosensor. Unfolded proteins bind initially to DnaJ; upon interaction with the DnaJ-bound protein, DnaK hydrolyzes its bound ATP, resulting in the formation of a stable complex. GrpE releases ADP from DnaK; ATP binding to DnaK triggers the release of the substrate protein, thus completing the reaction cycle. Several rounds of ATP-dependent interactions between DnaJ, DnaK and GrpE are required for fully efficient folding. The protein is Protein GrpE of Bordetella bronchiseptica (strain ATCC BAA-588 / NCTC 13252 / RB50) (Alcaligenes bronchisepticus).